The following is an 806-amino-acid chain: Conserved oligomeric Golgi complex subunit 6 (806 aa).

Belongs to the COG6 family.

The protein localises to the golgi apparatus membrane. In terms of biological role, acts as a component of the peripheral membrane COG complex that is involved in intra-Golgi protein trafficking. COG is located at the cis-Golgi, and regulates tethering of retrograde intra-Golgi vesicles and possibly a number of other membrane trafficking events. The protein is Conserved oligomeric Golgi complex subunit 6 (COG6) of Eremothecium gossypii (strain ATCC 10895 / CBS 109.51 / FGSC 9923 / NRRL Y-1056) (Yeast).